The chain runs to 50 residues: Large ribosomal subunit protein eL39 (50 aa).

Belongs to the eukaryotic ribosomal protein eL39 family.

The polypeptide is Large ribosomal subunit protein eL39 (Methanoculleus marisnigri (strain ATCC 35101 / DSM 1498 / JR1)).